A 502-amino-acid polypeptide reads, in one-letter code: Cytochrome P450 2J3 (502 aa).

A heme-binding site is contributed by Cys448.

The protein belongs to the cytochrome P450 family. It depends on heme as a cofactor. In terms of tissue distribution, abundantly expressed in heart and liver.

The protein resides in the endoplasmic reticulum membrane. It is found in the microsome membrane. It carries out the reaction an organic molecule + reduced [NADPH--hemoprotein reductase] + O2 = an alcohol + oxidized [NADPH--hemoprotein reductase] + H2O + H(+). Its function is as follows. This enzyme metabolizes arachidonic acid predominantly via a NADPH-dependent olefin epoxidation mainly to 14,15-, 11,12-, and 8,9-epoxyeicosatrienoic acids (EET). It also acts as an omega-1-hydroxylase by metabolizing arachidonic acid to 19-hydroxyeicosatetraenoic acid (19-OH-AA). This chain is Cytochrome P450 2J3 (Cyp2j3), found in Rattus norvegicus (Rat).